The sequence spans 236 residues: Phosphoribosylaminoimidazole-succinocarboxamide synthase (236 aa).

The protein belongs to the SAICAR synthetase family.

It catalyses the reaction 5-amino-1-(5-phospho-D-ribosyl)imidazole-4-carboxylate + L-aspartate + ATP = (2S)-2-[5-amino-1-(5-phospho-beta-D-ribosyl)imidazole-4-carboxamido]succinate + ADP + phosphate + 2 H(+). Its pathway is purine metabolism; IMP biosynthesis via de novo pathway; 5-amino-1-(5-phospho-D-ribosyl)imidazole-4-carboxamide from 5-amino-1-(5-phospho-D-ribosyl)imidazole-4-carboxylate: step 1/2. This is Phosphoribosylaminoimidazole-succinocarboxamide synthase from Rickettsia massiliae (strain Mtu5).